The chain runs to 471 residues: Methylenetetrahydrofolate--tRNA-(uracil-5-)-methyltransferase TrmFO (471 aa).

9 to 14 serves as a coordination point for FAD; it reads GGGLSG.

The protein belongs to the MnmG family. TrmFO subfamily. Requires FAD as cofactor.

It is found in the cytoplasm. It carries out the reaction uridine(54) in tRNA + (6R)-5,10-methylene-5,6,7,8-tetrahydrofolate + NADH + H(+) = 5-methyluridine(54) in tRNA + (6S)-5,6,7,8-tetrahydrofolate + NAD(+). The catalysed reaction is uridine(54) in tRNA + (6R)-5,10-methylene-5,6,7,8-tetrahydrofolate + NADPH + H(+) = 5-methyluridine(54) in tRNA + (6S)-5,6,7,8-tetrahydrofolate + NADP(+). Functionally, catalyzes the folate-dependent formation of 5-methyl-uridine at position 54 (M-5-U54) in all tRNAs. This is Methylenetetrahydrofolate--tRNA-(uracil-5-)-methyltransferase TrmFO from Beijerinckia indica subsp. indica (strain ATCC 9039 / DSM 1715 / NCIMB 8712).